Reading from the N-terminus, the 446-residue chain is Trigger factor (446 aa).

Residues 163-248 (GDIVTIDFKG…VRGIKRKKLA (86 aa)) enclose the PPIase FKBP-type domain. The disordered stretch occupies residues 423-446 (SKPVPPREQGAAGETAETAEATPA). Residues 432–446 (GAAGETAETAEATPA) show a composition bias toward low complexity.

The protein belongs to the FKBP-type PPIase family. Tig subfamily.

It is found in the cytoplasm. It carries out the reaction [protein]-peptidylproline (omega=180) = [protein]-peptidylproline (omega=0). Involved in protein export. Acts as a chaperone by maintaining the newly synthesized protein in an open conformation. Functions as a peptidyl-prolyl cis-trans isomerase. This chain is Trigger factor, found in Moorella thermoacetica (strain ATCC 39073 / JCM 9320).